The primary structure comprises 361 residues: Phospho-N-acetylmuramoyl-pentapeptide-transferase (361 aa).

Helical transmembrane passes span 21 to 41 (YLTIRALLAMLSALFIGLMLG), 69 to 89 (VGTPTMGGILILFAFIVSILI), 93 to 113 (WSNIYLWIIIVTSIIFSAIGF), 131 to 151 (SIKFLTQSLSAIVISTWIILI), 168 to 188 (IILPLSVFDFLILSYFVIVGS), 200 to 220 (GLAIMSVILISGALAIFAYFS), 240 to 260 (LFIICAALIGSSLGFLWFNAY), 264 to 284 (IFMGDVGSLSLGAILAVIAIL), 289 to 309 (ILLFIMGGVFVAETLSVIIQV), and 338 to 358 (KIIVRFWIVTLILVLIGLASI).

This sequence belongs to the glycosyltransferase 4 family. MraY subfamily. The cofactor is Mg(2+).

Its subcellular location is the cell inner membrane. It carries out the reaction UDP-N-acetyl-alpha-D-muramoyl-L-alanyl-gamma-D-glutamyl-meso-2,6-diaminopimeloyl-D-alanyl-D-alanine + di-trans,octa-cis-undecaprenyl phosphate = di-trans,octa-cis-undecaprenyl diphospho-N-acetyl-alpha-D-muramoyl-L-alanyl-D-glutamyl-meso-2,6-diaminopimeloyl-D-alanyl-D-alanine + UMP. It functions in the pathway cell wall biogenesis; peptidoglycan biosynthesis. Functionally, catalyzes the initial step of the lipid cycle reactions in the biosynthesis of the cell wall peptidoglycan: transfers peptidoglycan precursor phospho-MurNAc-pentapeptide from UDP-MurNAc-pentapeptide onto the lipid carrier undecaprenyl phosphate, yielding undecaprenyl-pyrophosphoryl-MurNAc-pentapeptide, known as lipid I. This Vesicomyosocius okutanii subsp. Calyptogena okutanii (strain HA) protein is Phospho-N-acetylmuramoyl-pentapeptide-transferase.